Consider the following 1476-residue polypeptide: ABC transporter G family member 17 (1476 aa).

2 disordered regions span residues 13–45 (SENNNNNNNNNNNNNNNNNNNLNNNNDNDYDYD) and 68–91 (FREIDGGKNNNNHDIELGERKPEN). Residues 14 to 67 (ENNNNNNNNNNNNNNNNNNNLNNNNDNDYDYDSINNIEEKFENVSKELEGQSIK) are a coiled coil. The segment covering 15 to 39 (NNNNNNNNNNNNNNNNNNNLNNNND) has biased composition (low complexity). Residues 151–402 (LNPFNYFKKD…FLDLGFDCEP (252 aa)) form the ABC transporter 1 domain. The 245-residue stretch at 507-751 (WGDKFTLTSR…SLSVKGENYL (245 aa)) folds into the ABC transmembrane type-2 1 domain. Transmembrane regions (helical) follow at residues 517-537 (FLTILVLSFIFGGIYFQQPLT), 547-567 (AIFTSIIFNCILTQGELHGAL), 592-612 (ILIDIPFILVQVFLHSFIVYF), 623-643 (FFIFCFTLVGVSLSSASLFRG), and 764-784 (LNVVVIFLFWLFYIGLNLFAV). The region spanning 838 to 1082 (FSWKSISYTV…LTSYFERHGV (245 aa)) is the ABC transporter 2 domain. 874–881 (GSSGAGKT) provides a ligand contact to ATP. A run of 6 helical transmembrane segments spans residues 1182 to 1202 (FYTMGSFAQSAVSGLVIGFTF), 1219 to 1239 (SWEAMILGVLLIYLVLPMFFI), 1260 to 1280 (LSMIAVEIPYVVLSSTLFFIA), 1298 to 1318 (WLMHTMFSVYIVSFAQALGAA), 1322 to 1342 (IAISIAALPIVLFYLFLLCGV), and 1450 to 1470 (FGIIVAYWGSSILAVLFFVYL). The 224-residue stretch at 1182-1405 (FYTMGSFAQS…TDCQTYSAPF (224 aa)) folds into the ABC transmembrane type-2 2 domain.

This sequence belongs to the ABC transporter superfamily. ABCG family. PDR (TC 3.A.1.205) subfamily.

Its subcellular location is the membrane. In Dictyostelium discoideum (Social amoeba), this protein is ABC transporter G family member 17 (abcG17-1).